The chain runs to 342 residues: Holliday junction branch migration complex subunit RuvB (342 aa).

A large ATPase domain (RuvB-L) region spans residues 1–179 (MTNILSPEKS…FGIPMRLNFY (179 aa)). Residues Ile18, Arg19, Gly60, Lys63, Thr64, Thr65, 126 to 128 (EDF), Arg169, Tyr179, and Arg216 each bind ATP. Thr64 contacts Mg(2+). The segment at 180-250 (NTEELKQVLN…ICDFGLKRLT (71 aa)) is small ATPAse domain (RuvB-S). Residues 253–342 (SIGLDSNDYR…HQFNILNENE (90 aa)) form a head domain (RuvB-H) region. Residues Arg289, Arg308, and Arg313 each coordinate DNA.

This sequence belongs to the RuvB family. In terms of assembly, homohexamer. Forms an RuvA(8)-RuvB(12)-Holliday junction (HJ) complex. HJ DNA is sandwiched between 2 RuvA tetramers; dsDNA enters through RuvA and exits via RuvB. An RuvB hexamer assembles on each DNA strand where it exits the tetramer. Each RuvB hexamer is contacted by two RuvA subunits (via domain III) on 2 adjacent RuvB subunits; this complex drives branch migration. In the full resolvosome a probable DNA-RuvA(4)-RuvB(12)-RuvC(2) complex forms which resolves the HJ.

The protein localises to the cytoplasm. It carries out the reaction ATP + H2O = ADP + phosphate + H(+). The RuvA-RuvB-RuvC complex processes Holliday junction (HJ) DNA during genetic recombination and DNA repair, while the RuvA-RuvB complex plays an important role in the rescue of blocked DNA replication forks via replication fork reversal (RFR). RuvA specifically binds to HJ cruciform DNA, conferring on it an open structure. The RuvB hexamer acts as an ATP-dependent pump, pulling dsDNA into and through the RuvAB complex. RuvB forms 2 homohexamers on either side of HJ DNA bound by 1 or 2 RuvA tetramers; 4 subunits per hexamer contact DNA at a time. Coordinated motions by a converter formed by DNA-disengaged RuvB subunits stimulates ATP hydrolysis and nucleotide exchange. Immobilization of the converter enables RuvB to convert the ATP-contained energy into a lever motion, pulling 2 nucleotides of DNA out of the RuvA tetramer per ATP hydrolyzed, thus driving DNA branch migration. The RuvB motors rotate together with the DNA substrate, which together with the progressing nucleotide cycle form the mechanistic basis for DNA recombination by continuous HJ branch migration. Branch migration allows RuvC to scan DNA until it finds its consensus sequence, where it cleaves and resolves cruciform DNA. The polypeptide is Holliday junction branch migration complex subunit RuvB (Rickettsia typhi (strain ATCC VR-144 / Wilmington)).